A 255-amino-acid chain; its full sequence is 5'-nucleotidase SurE (255 aa).

Positions 8, 9, 39, and 91 each coordinate a divalent metal cation.

This sequence belongs to the SurE nucleotidase family. A divalent metal cation serves as cofactor.

Its subcellular location is the cytoplasm. The enzyme catalyses a ribonucleoside 5'-phosphate + H2O = a ribonucleoside + phosphate. Nucleotidase that shows phosphatase activity on nucleoside 5'-monophosphates. This Acinetobacter baumannii (strain SDF) protein is 5'-nucleotidase SurE.